Here is a 142-residue protein sequence, read N- to C-terminus: Large-conductance mechanosensitive channel (142 aa).

Helical transmembrane passes span 14 to 34 and 82 to 102; these read VMDL…VDSV and GNFI…FLLI.

The protein belongs to the MscL family. As to quaternary structure, homopentamer.

The protein localises to the cell inner membrane. Its function is as follows. Channel that opens in response to stretch forces in the membrane lipid bilayer. May participate in the regulation of osmotic pressure changes within the cell. This Sinorhizobium medicae (strain WSM419) (Ensifer medicae) protein is Large-conductance mechanosensitive channel.